A 335-amino-acid polypeptide reads, in one-letter code: MPAVLGFEGSANKIGVGVVRDGTVLANPRRTYVTAPGTGFLPGDTARHHRAVILDLLQEALAEAGLTSKDIDCIAFTKGPGMGAPLASVAVVARTVAQLWNKPLLGVNHCIGHIEMGRLITGAVNPTVLYVSGGNTQVISYSEHRYRIFGETIDIAVGNCLDRFARVLKISNDPSPGYNIEQMAKRGKKLVELPYTVKGMDVSFSGILSFIEDAAQRMLATGECTPEDLCFSLQETVFAMLVEITERAMAHCGSKEALIVGGVGCNLRLQEMMGTMCQERGAQLFATDERFCVDNGAMIAQAGWEMFQAGHRTPLKDSAITQRYRTDEVEVTWRD.

A divalent metal cation-binding residues include His-109, His-113, and Tyr-130. Substrate contacts are provided by residues 130 to 134, Asp-162, Gly-177, Glu-181, and Asn-266; that span reads YVSGG. Asp-294 provides a ligand contact to a divalent metal cation.

This sequence belongs to the KAE1 / TsaD family. In terms of assembly, component of the EKC/KEOPS complex composed of at least GON7, TP53RK, TPRKB, OSGEP and LAGE3; the whole complex dimerizes. A divalent metal cation is required as a cofactor. Widely expressed at low level. Expressed at intermediate level in lung. Weakly expressed in testis, skeletal muscle, kidney, liver, spleen, brain and heart.

It is found in the cytoplasm. It localises to the nucleus. The catalysed reaction is L-threonylcarbamoyladenylate + adenosine(37) in tRNA = N(6)-L-threonylcarbamoyladenosine(37) in tRNA + AMP + H(+). Its function is as follows. Component of the EKC/KEOPS complex that is required for the formation of a threonylcarbamoyl group on adenosine at position 37 (t(6)A37) in tRNAs that read codons beginning with adenine. The complex is probably involved in the transfer of the threonylcarbamoyl moiety of threonylcarbamoyl-AMP (TC-AMP) to the N6 group of A37. OSGEP likely plays a direct catalytic role in this reaction, but requires other protein(s) of the complex to fulfill this activity. This Mus musculus (Mouse) protein is tRNA N6-adenosine threonylcarbamoyltransferase (Osgep).